Reading from the N-terminus, the 113-residue chain is Iron-sulfur cluster insertion protein ErpA (113 aa).

Cysteine 41, cysteine 105, and cysteine 107 together coordinate iron-sulfur cluster.

It belongs to the HesB/IscA family. In terms of assembly, homodimer. The cofactor is iron-sulfur cluster.

Required for insertion of 4Fe-4S clusters for at least IspG. This is Iron-sulfur cluster insertion protein ErpA from Aliivibrio salmonicida (strain LFI1238) (Vibrio salmonicida (strain LFI1238)).